Reading from the N-terminus, the 188-residue chain is Protein-arginine kinase activator protein (188 aa).

4 short sequence motifs (CXXC metal binding motif) span residues 3–6, 29–32, 87–90, and 105–108; these read CENC, CQTC, CPSC, and CANC. A UVR domain is found at 145–180; sequence KRKIEEKNEYLKKLIEIQDFEEAAIVRDEIKALKAE.

As to quaternary structure, interacts with McsB and CtsR; the CXXC motifs are needed for the binding.

In terms of biological role, activates the phosphorylation activity of the protein-arginine kinase McsB. May function as an important molecule for oxidative tolerance in various types of stress including that of heavy metals. Binds to Cu(2+), Zn(2+), Co(2+) and Cd(2+) via its CXXC metal binding motifs. This chain is Protein-arginine kinase activator protein, found in Staphylococcus aureus (strain NCTC 8325 / PS 47).